The sequence spans 351 residues: Putative NBPF family member NBPF5 (351 aa).

2 coiled-coil regions span residues 10-43 (SERA…EKFL) and 69-115 (DSVL…KLRE). Residues 157–285 (HLVHKLSPEN…VPPRHHDKSN (129 aa)) are disordered. Over residues 165 to 179 (ENDEDEDEDEDDKDE) the composition is skewed to acidic residues. Residues 174–261 (EDDKDEEVEK…EEEEALNIPP (88 aa)) enclose the Olduvai domain. Residues 192 to 202 (EVQKTEEKEVP) show a composition bias toward basic and acidic residues. A compositionally biased stretch (low complexity) spans 214 to 226 (SNSHNPSNSNQPH). Basic and acidic residues-rich tracts occupy residues 232 to 251 (TFKE…HPHD) and 264 to 273 (QNDHEEEEGK).

The protein belongs to the NBPF family. As to expression, expressed in brain and medulla.

It localises to the cytoplasm. This chain is Putative NBPF family member NBPF5, found in Homo sapiens (Human).